The sequence spans 109 residues: Nucleoid-associated protein Caul_4574 (109 aa).

Belongs to the YbaB/EbfC family. As to quaternary structure, homodimer.

It is found in the cytoplasm. Its subcellular location is the nucleoid. Its function is as follows. Binds to DNA and alters its conformation. May be involved in regulation of gene expression, nucleoid organization and DNA protection. The protein is Nucleoid-associated protein Caul_4574 of Caulobacter sp. (strain K31).